Here is a 322-residue protein sequence, read N- to C-terminus: Pyrroline-5-carboxylate reductase (322 aa).

The next 2 membrane-spanning stretches (helical) occupy residues 9–29 (YPNV…VGLL) and 117–137 (ILIS…LHFW). Positions 302 to 322 (LSQSAGSHGEDNTTDSKTSRA) are disordered. The N-linked (GlcNAc...) asparagine glycan is linked to asparagine 313.

The protein belongs to the pyrroline-5-carboxylate reductase family.

The protein localises to the membrane. The catalysed reaction is L-proline + NADP(+) = (S)-1-pyrroline-5-carboxylate + NADPH + 2 H(+). The enzyme catalyses L-proline + NAD(+) = (S)-1-pyrroline-5-carboxylate + NADH + 2 H(+). It participates in alkaloid biosynthesis. Functionally, pyrroline-5-carboxylate reductase; part of the gene cluster that mediates the biosynthesis of paraherquamide, a fungal indole alkaloid that belongs to a family of natural products containing a characteristic bicyclo[2.2.2]diazaoctane core. The first steps in the biosynthesis of paraherquamide is the production of the beta-methyl-proline precursor from L-isoleucine. They require oxidation of a terminally hydroxylated L-isoleucine to the corresponding aldehyde by enzymes which have still to be identified. Spontaneous cyclization and dehydration would yield the 4-methyl pyrolline-5-carboxylic acid, which is then reduced by the pyrroline-5-carboxylate reductase phqD leading to the beta-methyl-proline precursor. The next step of paraherquamide biosynthesis involves coupling of beta-methyl-proline and L-tryptophan by the bimodular NRPS phqB, to produce a monooxopiperazine intermediate. The reductase (R) domain of phqB utilizes NADPH for hydride transfer to reduce the thioester bond of the T domain-tethered linear dipeptide to a hemithioaminal intermediate, which spontaneously cleaves the C-S bond to release the aldehyde product. This compound undergoes spontaneous cyclization and dehydration to give a dienamine which is reverse prenylated at C-2 by the reverse prenyltransferase phqJ. The other prenyltransferase present in the cluster, phqI may be a redundant gene in the pathway. During biosynthetic assembly, the key step to produce the polycyclic core is catalyzed by the bifunctional reductase and intramolecular [4+2] Diels-Alderase, phqE, resulting in formation of the [2.2.2] diazaoctane intermediate preparaherquamide. Following formation of preparaherquamide, an indole 2,3-epoxidation-initiated pinacol-like rearrangement is catalyzed by the phqK FAD-dependent monooxygenase. The prenyltransferase phqA, the cytochrome P450 monooxygenase phqL, and the FAD-linked oxidoreductase phqH (or the cytochrome P450 monooxygenase phqM), are proposed to be involved in the formation of the pyran ring. The FAD-dependent monooxygenase phqK is likely responsible for generation of the spiro-oxindole, and the N-methylation is likely mediated by the phqN methyltransferase leading to the isolable natural product paraherquamide F. However, the order of these biosynthetic steps has still to be determined. In late-stage paraherquamide biosynthesis, the third P450 monooxygenase, phqO, is probably responsible for the C-14 hydroxylation, transforming paraherquamide F to paraherquamide G, and paraherquamide E to the final product paraherquamide A. The expansion from the 6-membered ring pyran (in paraherquamides F and G) to the 7-membered dioxepin ring (in paraherquamides A and E) represents a poorly understood but intriguing process that probably involves the 2-oxoglutarate-dependent dioxygenase phqC. Finally, the remaining members of the paraherquamide cluster, including phqI as well as phqM (or phqH), do not have a clearly prescribed role and appear to be redundant. The protein is Pyrroline-5-carboxylate reductase of Penicillium fellutanum.